The sequence spans 303 residues: Enoyl-CoA hydratase domain-containing protein 3, mitochondrial (303 aa).

The transit peptide at 1–17 (MAAVAVLRAFGASGPMC) directs the protein to the mitochondrion. K110 is subject to N6-succinyllysine.

It belongs to the enoyl-CoA hydratase/isomerase family. As to expression, expressed in adipocytes. Expressed in blood cells, with higher expression in patients with low coronary lesions.

The protein localises to the mitochondrion. May play a role in fatty acid biosynthesis and insulin sensitivity. In Homo sapiens (Human), this protein is Enoyl-CoA hydratase domain-containing protein 3, mitochondrial.